We begin with the raw amino-acid sequence, 205 residues long: N-(5'-phosphoribosyl)anthranilate isomerase (205 aa).

This sequence belongs to the TrpF family.

The catalysed reaction is N-(5-phospho-beta-D-ribosyl)anthranilate = 1-(2-carboxyphenylamino)-1-deoxy-D-ribulose 5-phosphate. It participates in amino-acid biosynthesis; L-tryptophan biosynthesis; L-tryptophan from chorismate: step 3/5. The chain is N-(5'-phosphoribosyl)anthranilate isomerase from Phocaeicola vulgatus (strain ATCC 8482 / DSM 1447 / JCM 5826 / CCUG 4940 / NBRC 14291 / NCTC 11154) (Bacteroides vulgatus).